The chain runs to 367 residues: Cytochrome b (367 aa).

Transmembrane regions (helical) follow at residues 25-45 (FGSM…FLAI), 69-90 (WIMQ…YIHI), 105-125 (WLSG…GYVL), and 170-190 (FFAL…IHII). Heme b-binding residues include His-75 and His-89. The heme b site is built by His-174 and His-188. His-193 is an a ubiquinone binding site. A run of 4 helical transmembrane segments spans residues 218-238 (YKDV…MSFT), 280-300 (LGGT…PFTH), 312-332 (LTQA…WTAT), and 339-358 (FIFI…IINP).

This sequence belongs to the cytochrome b family. The cytochrome bc1 complex contains 3 respiratory subunits (MT-CYB, CYC1 and UQCRFS1), 2 core proteins (UQCRC1 and UQCRC2) and probably 6 low-molecular weight proteins. It depends on heme b as a cofactor.

Its subcellular location is the mitochondrion inner membrane. Component of the ubiquinol-cytochrome c reductase complex (complex III or cytochrome b-c1 complex) that is part of the mitochondrial respiratory chain. The b-c1 complex mediates electron transfer from ubiquinol to cytochrome c. Contributes to the generation of a proton gradient across the mitochondrial membrane that is then used for ATP synthesis. The sequence is that of Cytochrome b (MT-CYB) from Austrelaps superbus (Lowland copperhead snake).